Consider the following 67-residue polypeptide: Large ribosomal subunit protein bL31 (67 aa).

This sequence belongs to the bacterial ribosomal protein bL31 family. Type A subfamily. Part of the 50S ribosomal subunit.

Functionally, binds the 23S rRNA. In Leptospira borgpetersenii serovar Hardjo-bovis (strain JB197), this protein is Large ribosomal subunit protein bL31.